Reading from the N-terminus, the 118-residue chain is NADH dehydrogenase [ubiquinone] iron-sulfur protein 5-A (118 aa).

One can recognise a CHCH domain in the interval 46 to 87 (KGRCYDFWMDFSECMSHCREPKDCTLLREDYLECLHHSKEFQ). 2 short sequence motifs (cx9C motif) span residues 49 to 59 (CYDFWMDFSEC) and 69 to 79 (CTLLREDYLEC). Intrachain disulfides connect C49-C79 and C59-C69. The segment at 98-118 (RKLRAASRKGEEAGDGTHNHH) is disordered.

Belongs to the complex I NDUFS5 subunit family. As to quaternary structure, complex I is composed of at least 49 different subunits. This is a component of the iron-sulfur (IP) fragment of the enzyme.

Its subcellular location is the mitochondrion. The protein localises to the mitochondrion inner membrane. The protein resides in the mitochondrion intermembrane space. Accessory subunit of the mitochondrial membrane respiratory chain NADH dehydrogenase (Complex I), that is believed not to be involved in catalysis. Complex I functions in the transfer of electrons from NADH to the respiratory chain. The immediate electron acceptor for the enzyme is believed to be ubiquinone. The sequence is that of NADH dehydrogenase [ubiquinone] iron-sulfur protein 5-A from Arabidopsis thaliana (Mouse-ear cress).